The sequence spans 136 residues: Protein NrdI (136 aa).

Belongs to the NrdI family.

Its function is as follows. Probably involved in ribonucleotide reductase function. This is Protein NrdI from Shigella dysenteriae serotype 1 (strain Sd197).